A 687-amino-acid chain; its full sequence is Bifunctional lysine-specific demethylase and histidyl-hydroxylase NO66 (687 aa).

Positions 1-174 (MSDKNKKVSA…RSCPLPSKKN (174 aa)) are disordered. Residues 23–32 (DVQKGTKNSD) are compositionally biased toward basic and acidic residues. 2 stretches are compositionally biased toward low complexity: residues 33–50 (KNGA…SKNG) and 58–74 (KKNG…SSSS). Residues 75 to 96 (GEDEEDDSTDSSDEYESSESGE) show a composition bias toward acidic residues. Composition is skewed to polar residues over residues 100-116 (LNSH…ANTR) and 136-156 (RTSS…QQPK). The JmjC domain maps to 347 to 483 (NPSSYLVQLR…NLMEKLMPLV (137 aa)). Fe cation is bound by residues His-387, Asp-389, and His-449.

This sequence belongs to the ROX family. NO66 subfamily. Requires Fe(2+) as cofactor.

It localises to the nucleus. It carries out the reaction N(6),N(6)-dimethyl-L-lysyl(36)-[histone H3] + 2 2-oxoglutarate + 2 O2 = L-lysyl(36)-[histone H3] + 2 formaldehyde + 2 succinate + 2 CO2. Oxygenase that can act as both a histone lysine demethylase and a ribosomal histidine hydroxylase. Specifically demethylates 'Lys-4' (H3K4me) and 'Lys-36' (H3K36me) of histone H3, thereby playing a central role in histone code. This chain is Bifunctional lysine-specific demethylase and histidyl-hydroxylase NO66, found in Drosophila persimilis (Fruit fly).